We begin with the raw amino-acid sequence, 246 residues long: MAGAPDERRRGPAAGEQLQQQHVSCQVFPERLAQGNPQQGFFSSFFTSNQKCQLRLLKTLETNPYVKLLLDAMKHSGCAVNKDRHFSCEDCNGNVSGGFDASTSQIVLCQNNIHNQAHMNRVVTHELIHAFDHCRAHVDWFTNIRHLACSEVRAANLSGDCSLVNEIFRLHFGLKQHHQTCVRDRATLSILAVRNISKEVAKKAVDEVFESCFNDHEPFGRIPHNKTYARYAHRDFENRDRYYSNI.

H125 provides a ligand contact to a divalent metal cation. E126 is a catalytic residue. Residue H129 coordinates a divalent metal cation.

The protein belongs to the peptidase M76 family. Interacts with XRCC6.

In Homo sapiens (Human), this protein is Mitochondrial inner membrane protease ATP23 homolog.